A 199-amino-acid chain; its full sequence is Ribosome maturation factor RimM (199 aa).

The PRC barrel domain occupies 95–168; the sequence is EDEFYHADLV…FVRVDPVAAG (74 aa). The segment at 167 to 199 is disordered; it reads AGLVEDEDGDAPREEDFDPKGRPRGPRDAGGNR. Basic and acidic residues predominate over residues 176-193; sequence DAPREEDFDPKGRPRGPR.

This sequence belongs to the RimM family. Binds ribosomal protein uS19.

The protein localises to the cytoplasm. Functionally, an accessory protein needed during the final step in the assembly of 30S ribosomal subunit, possibly for assembly of the head region. Essential for efficient processing of 16S rRNA. May be needed both before and after RbfA during the maturation of 16S rRNA. It has affinity for free ribosomal 30S subunits but not for 70S ribosomes. In Mesorhizobium japonicum (strain LMG 29417 / CECT 9101 / MAFF 303099) (Mesorhizobium loti (strain MAFF 303099)), this protein is Ribosome maturation factor RimM.